A 689-amino-acid polypeptide reads, in one-letter code: MSEKTFLVEIGTEELPPKALRSLAESFAANFTAELDNAGLAHGTVQWFAAPRRLALKVANLAEAQPDREIEKRGPAIAQAFDAEGKPSKAAEGWARGCGITVDQAERLTSDKGEWLLYRAHVKGESTEALLPNMVATSLAKLPIPKLMRWGASDVHFVRPVHTVTLLLGDKVIPATILGIQSDRVIRGHRFMGEPEFTIDNADQYPEILRERGKVIADYEERKAKIKADAEEAARKIGGNADLSESLLEEVASLVEWPVVLTAKFEEKFLAVPSEALVYTMKGDQKYFPVYANDGKLLPNFIFVANIESKDPQQIISGNEKVVRPRLADAEFFFNTDRKKRLEDNLPRLQTVLFQQQLGTLRDKTDRIQALAGWIAEQIGADVNHATRAGLLSKCDLMTNMVFEFTDTQGVMGMHYARHDGEAEDVAVALNEQYQPRFAGDDLPSNPVACALAIADKMDTLAGIFGIGQHPKGDKDPFALRRAALGVLRIIVEKNLNLDLQTLTEEAVRLYGDKLTNANVVDDVIDFMLGRFRAWYQDEGYTVDTIQAVLARRPTRPADFDARMKAVSHFRTLDAAAALAAANKRVSNILAKSDEVLSDRVNASTLKEPEEIKLAMQVVVLRDKLEPYFAEGRYQDALVELAELREPVDAFFDKVMVMVDDKELRLNRLTMLEKLRELFLRVADISLLQ.

It belongs to the class-II aminoacyl-tRNA synthetase family. Tetramer of two alpha and two beta subunits.

The protein localises to the cytoplasm. It carries out the reaction tRNA(Gly) + glycine + ATP = glycyl-tRNA(Gly) + AMP + diphosphate. This is Glycine--tRNA ligase beta subunit from Escherichia coli O8 (strain IAI1).